An 895-amino-acid polypeptide reads, in one-letter code: DNA mismatch repair protein MutS (895 aa).

Glycine 607 to serine 614 contacts ATP.

The protein belongs to the DNA mismatch repair MutS family.

In terms of biological role, this protein is involved in the repair of mismatches in DNA. It is possible that it carries out the mismatch recognition step. This protein has a weak ATPase activity. This Bacillus cytotoxicus (strain DSM 22905 / CIP 110041 / 391-98 / NVH 391-98) protein is DNA mismatch repair protein MutS.